The sequence spans 87 residues: Small ribosomal subunit protein bS20 (87 aa).

Belongs to the bacterial ribosomal protein bS20 family.

Its function is as follows. Binds directly to 16S ribosomal RNA. The polypeptide is Small ribosomal subunit protein bS20 (Shigella flexneri serotype 5b (strain 8401)).